Consider the following 262-residue polypeptide: Small ribosomal subunit protein uS2 (262 aa).

Residues 223-262 are disordered; it reads KSLLEQDGGEQAAGEEVSQDEKDAVVAEAMSEEDFGEDEE. The span at 227–238 shows a compositional bias: low complexity; sequence EQDGGEQAAGEE. A compositionally biased stretch (acidic residues) spans 252–262; the sequence is MSEEDFGEDEE.

Belongs to the universal ribosomal protein uS2 family.

This chain is Small ribosomal subunit protein uS2, found in Campylobacter concisus (strain 13826).